A 259-amino-acid polypeptide reads, in one-letter code: Global transcriptional regulator CodY (259 aa).

Residues 1-155 are GAF domain; it reads MDLLSKTRRI…GATVVGMEIL (155 aa). A DNA-binding region (H-T-H motif) is located at residues 203–222; sequence ASKIADRVGITRSVIVNALR.

Belongs to the CodY family.

Its subcellular location is the cytoplasm. Functionally, DNA-binding global transcriptional regulator which is involved in the adaptive response to starvation and acts by directly or indirectly controlling the expression of numerous genes in response to nutrient availability. During rapid exponential growth, CodY is highly active and represses genes whose products allow adaptation to nutrient depletion. The chain is Global transcriptional regulator CodY from Brevibacillus brevis (strain 47 / JCM 6285 / NBRC 100599).